The following is a 412-amino-acid chain: Peptidase T (412 aa).

Residue His81 participates in Zn(2+) binding. Asp83 is an active-site residue. Asp144 serves as a coordination point for Zn(2+). Glu178 functions as the Proton acceptor in the catalytic mechanism. Positions 179, 201, and 383 each coordinate Zn(2+).

This sequence belongs to the peptidase M20B family. Requires Zn(2+) as cofactor.

The protein localises to the cytoplasm. The catalysed reaction is Release of the N-terminal residue from a tripeptide.. Functionally, cleaves the N-terminal amino acid of tripeptides. The sequence is that of Peptidase T from Bacillus cereus (strain Q1).